The sequence spans 479 residues: MFS-type transporter lnaF (479 aa).

A run of 11 helical transmembrane segments spans residues 47-67 (WIYLVALALFEIGSLVCGFTP), 71-91 (GLIIGRAITGLGSAGLFSGAI), 104-124 (LLCISVIMCLFGVADVAGPLI), 136-156 (WCFYINLPFGGLTALAIVFLL), 177-197 (LVGLLFLFPAVICLLLVLSWG), 208-228 (IIGLIVGFTALILVFIVVQWW), 250-270 (IFSFCITGAMMAFTYHLPIWF), 283-303 (LMSIPTILGMTICSLLSAVLV), 306-326 (IGFYTPFMYAAPVLSVIGAGL), 344-364 (IPFGIGLGIGLSQPMVVVQAV), and 372-392 (LAIAITAFMESLGGSVAISVA). N416 carries N-linked (GlcNAc...) asparagine glycosylation. A helical transmembrane segment spans residues 442–462 (LAITQALYVGVALSSLAIVGA).

The protein belongs to the major facilitator superfamily. TCR/Tet family.

The protein resides in the cell membrane. Its function is as follows. MFS-type transporter; part of the lnb gene cluster that mediates the biosynthesis of diastereomeric piperazines. Lna and lnb clusters encode sets of enzymes that produce overlapping sets of previously undescribed metabolites such as piperazinomycin-like metabolites or morpholine. The lna and lnb biosynthetic pathways appear to be part of a signaling network that controls the formation of sclerotia, a resilient overwintering structure. May be involved in the secretion of the metabolites produced by the lna and lnb clusters. This is MFS-type transporter lnaF from Aspergillus flavus (strain ATCC 200026 / FGSC A1120 / IAM 13836 / NRRL 3357 / JCM 12722 / SRRC 167).